Reading from the N-terminus, the 372-residue chain is Chaperone protein DnaJ (372 aa).

A J domain is found at D5–G69. A CR-type zinc finger spans residues G139–R221. Residues C152, C155, C169, C172, C195, C198, C209, and C212 each contribute to the Zn(2+) site. 4 CXXCXGXG motif repeats span residues C152–G159, C169–G176, C195–G202, and C209–G216.

It belongs to the DnaJ family. As to quaternary structure, homodimer. It depends on Zn(2+) as a cofactor.

It localises to the cytoplasm. Functionally, participates actively in the response to hyperosmotic and heat shock by preventing the aggregation of stress-denatured proteins and by disaggregating proteins, also in an autonomous, DnaK-independent fashion. Unfolded proteins bind initially to DnaJ; upon interaction with the DnaJ-bound protein, DnaK hydrolyzes its bound ATP, resulting in the formation of a stable complex. GrpE releases ADP from DnaK; ATP binding to DnaK triggers the release of the substrate protein, thus completing the reaction cycle. Several rounds of ATP-dependent interactions between DnaJ, DnaK and GrpE are required for fully efficient folding. Also involved, together with DnaK and GrpE, in the DNA replication of plasmids through activation of initiation proteins. This is Chaperone protein DnaJ from Mycoplasma mycoides subsp. mycoides SC (strain CCUG 32753 / NCTC 10114 / PG1).